A 432-amino-acid chain; its full sequence is Lysosomal acid phosphatase (432 aa).

The N-terminal stretch at 1-32 (MADGSCLGSGPQLGLIALLVVLLFSAVPLAQS) is a signal peptide. Over 33-384 (RELRFVTLVY…TTSFIMTEET (352 aa)) the chain is Lumenal. Residue histidine 44 is the Nucleophile of the active site. N-linked (GlcNAc...) asparagine glycans are attached at residues asparagine 94, asparagine 135, asparagine 179, asparagine 193, and asparagine 269. 3 disulfides stabilise this stretch: cysteine 161–cysteine 373, cysteine 214–cysteine 313, and cysteine 348–cysteine 352. The active-site Proton donor is aspartate 290. 2 N-linked (GlcNAc...) asparagine glycosylation sites follow: asparagine 325 and asparagine 334. A helical membrane pass occupies residues 385-405 (IIGLTIGAIALFIIIVVLMLL). The Cytoplasmic segment spans residues 406–432 (SCNEPKDDGYQHVSDEGDDHETKGLAM).

This sequence belongs to the histidine acid phosphatase family. Post-translationally, the membrane-bound form is converted to the soluble form by sequential proteolytic processing. First, the C-terminal cytoplasmic tail is removed. Cleavage by a lysosomal protease releases the soluble form in the lysosome lumen.

Its subcellular location is the lysosome membrane. It localises to the lysosome lumen. It catalyses the reaction a phosphate monoester + H2O = an alcohol + phosphate. The polypeptide is Lysosomal acid phosphatase (acp2) (Xenopus laevis (African clawed frog)).